We begin with the raw amino-acid sequence, 114 residues long: Fatty acid-binding protein, liver (114 aa).

It belongs to the calycin superfamily. Fatty-acid binding protein (FABP) family. In terms of processing, the N-terminus is blocked.

The protein localises to the cytoplasm. FABPs are thought to play a role in the intracellular transport of long-chain fatty acids and their acyl-CoA esters. The chain is Fatty acid-binding protein, liver from Lethenteron camtschaticum (Japanese lamprey).